We begin with the raw amino-acid sequence, 333 residues long: Tetraacyldisaccharide 4'-kinase (333 aa).

ATP is bound at residue T60–T67.

Belongs to the LpxK family.

It catalyses the reaction a lipid A disaccharide + ATP = a lipid IVA + ADP + H(+). The protein operates within glycolipid biosynthesis; lipid IV(A) biosynthesis; lipid IV(A) from (3R)-3-hydroxytetradecanoyl-[acyl-carrier-protein] and UDP-N-acetyl-alpha-D-glucosamine: step 6/6. Transfers the gamma-phosphate of ATP to the 4'-position of a tetraacyldisaccharide 1-phosphate intermediate (termed DS-1-P) to form tetraacyldisaccharide 1,4'-bis-phosphate (lipid IVA). This chain is Tetraacyldisaccharide 4'-kinase, found in Pseudomonas putida (strain ATCC 700007 / DSM 6899 / JCM 31910 / BCRC 17059 / LMG 24140 / F1).